Reading from the N-terminus, the 194-residue chain is Cytochrome bo(3) ubiquinol oxidase subunit 3 (194 aa).

Topologically, residues 1 to 18 (MKKKYKIDTNIFSKELLG) are cytoplasmic. Residues 19–41 (FWLYLMSDCIIFCTLFSVYFILV) traverse the membrane as a helical segment. The Extracellular segment spans residues 42 to 55 (DNVAQGPSGHNIFQ). Residues 56 to 78 (NNLIIIETFLLLFSSFSCNLVLF) traverse the membrane as a helical segment. At 79-84 (EMKNKN) the chain is on the cytoplasmic side. A helical membrane pass occupies residues 85–107 (LYMVFLWLGITFLLGLLFVFLEL). Residues 108–126 (FEFFHLINLGFGPTRSGFL) are Extracellular-facing. A helical membrane pass occupies residues 127–149 (SSFFVLIATHGIHVISGLIWIIV). The Cytoplasmic segment spans residues 150–169 (MIKYVYTFNITNLIYYRMLC). A helical membrane pass occupies residues 170–192 (LNLFWHFLDIVWVFIFSFVYLFG). Topologically, residues 193-194 (MV) are extracellular.

It belongs to the cytochrome c oxidase subunit 3 family. As to quaternary structure, heterooctamer of two A chains, two B chains, two C chains and two D chains.

It is found in the cell membrane. Functionally, cytochrome bo(3) ubiquinol terminal oxidase is the component of the aerobic respiratory chain of E.coli that predominates when cells are grown at high aeration. Has proton pump activity across the membrane in addition to electron transfer, pumping 2 protons/electron. In Buchnera aphidicola subsp. Baizongia pistaciae (strain Bp), this protein is Cytochrome bo(3) ubiquinol oxidase subunit 3 (cyoC).